A 232-amino-acid polypeptide reads, in one-letter code: 5'-methylthioadenosine/S-adenosylhomocysteine nucleosidase (232 aa).

Glutamate 12 acts as the Proton acceptor in catalysis. Substrate is bound by residues glycine 78, isoleucine 152, and 173–174 (ME). Catalysis depends on aspartate 197, which acts as the Proton donor.

This sequence belongs to the PNP/UDP phosphorylase family. MtnN subfamily. Homodimer.

It catalyses the reaction S-adenosyl-L-homocysteine + H2O = S-(5-deoxy-D-ribos-5-yl)-L-homocysteine + adenine. It carries out the reaction S-methyl-5'-thioadenosine + H2O = 5-(methylsulfanyl)-D-ribose + adenine. The enzyme catalyses 5'-deoxyadenosine + H2O = 5-deoxy-D-ribose + adenine. It participates in amino-acid biosynthesis; L-methionine biosynthesis via salvage pathway; S-methyl-5-thio-alpha-D-ribose 1-phosphate from S-methyl-5'-thioadenosine (hydrolase route): step 1/2. Its function is as follows. Catalyzes the irreversible cleavage of the glycosidic bond in both 5'-methylthioadenosine (MTA) and S-adenosylhomocysteine (SAH/AdoHcy) to adenine and the corresponding thioribose, 5'-methylthioribose and S-ribosylhomocysteine, respectively. Also cleaves 5'-deoxyadenosine, a toxic by-product of radical S-adenosylmethionine (SAM) enzymes, into 5-deoxyribose and adenine. Thus, is required for in vivo function of the radical SAM enzymes biotin synthase and lipoic acid synthase, that are inhibited by 5'-deoxyadenosine accumulation. The protein is 5'-methylthioadenosine/S-adenosylhomocysteine nucleosidase of Salmonella enteritidis PT4 (strain P125109).